The sequence spans 771 residues: Chaperone protein dnaK3 (771 aa).

A Phosphothreonine; by autocatalysis modification is found at Thr198. The interval 624 to 771 (FDDDDDYYNR…GWDDDDDDWF (148 aa)) is disordered. Basic and acidic residues-rich tracts occupy residues 630 to 652 (YYNR…RYDD) and 708 to 734 (YDDR…RENA).

It belongs to the heat shock protein 70 family.

Acts as a chaperone. In Synechocystis sp. (strain ATCC 27184 / PCC 6803 / Kazusa), this protein is Chaperone protein dnaK3 (dnaK3).